The following is a 395-amino-acid chain: NAD(P)H-quinone oxidoreductase subunit H, chloroplastic (395 aa).

Belongs to the complex I 49 kDa subunit family. In terms of assembly, NDH is composed of at least 16 different subunits, 5 of which are encoded in the nucleus.

It is found in the plastid. Its subcellular location is the chloroplast thylakoid membrane. It carries out the reaction a plastoquinone + NADH + (n+1) H(+)(in) = a plastoquinol + NAD(+) + n H(+)(out). The catalysed reaction is a plastoquinone + NADPH + (n+1) H(+)(in) = a plastoquinol + NADP(+) + n H(+)(out). Its function is as follows. NDH shuttles electrons from NAD(P)H:plastoquinone, via FMN and iron-sulfur (Fe-S) centers, to quinones in the photosynthetic chain and possibly in a chloroplast respiratory chain. The immediate electron acceptor for the enzyme in this species is believed to be plastoquinone. Couples the redox reaction to proton translocation, and thus conserves the redox energy in a proton gradient. This is NAD(P)H-quinone oxidoreductase subunit H, chloroplastic from Staurastrum punctulatum (Green alga).